Here is a 108-residue protein sequence, read N- to C-terminus: uncharacterized protein (108 aa).

Positions 48–73 (NSNIPSSSSSSPSFASFFSSTSTSAT) are enriched in low complexity. The disordered stretch occupies residues 48 to 81 (NSNIPSSSSSSPSFASFFSSTSTSATLNGSSNNK).

This is an uncharacterized protein from Dictyostelium discoideum (Social amoeba).